We begin with the raw amino-acid sequence, 668 residues long: MLKKCILLVFLCVGLIGLIGCSKTDSPEDRMEAFVKQWNDQQFDDMYQSLTKDVKKEISKKDFVNRYKAIYEQAGVKNLKVTAGEVDKDDQDNKTMKHIPYKVSMNTNAGKVSFKNTAVLKLEKTDDEESWNIDWDPSFIFKQLADDKTVQIMSIEPKRGQIYDKNGKGLAVNTDVPEIGIVPGELGDKKEKVIKELAKKLDLTEDDIKKKLDQGWVKDDSFVPLKKVKPDQEKLVSEATSLQGVTRTNVSSRYYPYGEKTAHLTGYVRAITAEELKKKKEGTYSDTSNIGIAGLENVYEDKLRGTTGWKIYVPQTGEVIAEKKAKDGEDLHLTIDIKTQMKLYDELKDDSGAAVALQPKTGETLALVSAPSYDPNGFIFGWSDKEWKKLNKDKNNPFSAKFNKTYAPGSTIKPIAAAIGIKNGTLKADEKKTIKGKEWQKDSSWGGYSVTRVSERLQQVDLENALITSDNIYFAQNALDMGADTFTKGLKTFGFSEDVPYEFPIQKSSIANDKLDSDILLADTGYGQGQMQMSPLHLATAYTPFVDNGDLVKPTLIKKDSQTADVWHKQVVTKEGAADITKGLKGVVEDERGSAYQPVVKGITVAGKTGTAELKTSKDDKDGTENGWFVGYDYENKDLLVAMMIQNVQDRGGSHYVVEKAKKQFQSN.

Residues 7 to 23 form a helical membrane-spanning segment; sequence LLVFLCVGLIGLIGCSK. Ser-410 functions as the Acyl-ester intermediate in the catalytic mechanism.

It belongs to the transpeptidase family.

Its subcellular location is the cell membrane. The protein resides in the forespore inner membrane. The protein localises to the forespore outer membrane. It is found in the membrane raft. The catalysed reaction is Preferential cleavage: (Ac)2-L-Lys-D-Ala-|-D-Ala. Also transpeptidation of peptidyl-alanyl moieties that are N-acyl substituents of D-alanine.. It functions in the pathway cell wall biogenesis; peptidoglycan biosynthesis. Functionally, penicillin-binding proteins (PBPs) function in the late steps of murein biosynthesis. Probably required for both cortical and vegetative peptidoglycan synthesis. Although not usually required for cell division, in the absence of PBP 2B (pbpB) it becomes essential. Confers resistance to oxacillin and cephalexin. This chain is Penicillin-binding protein 3, found in Bacillus subtilis (strain 168).